A 450-amino-acid chain; its full sequence is Putative gustatory receptor 28a (450 aa).

The Cytoplasmic segment spans residues 1–47 (MAFKLWERFSQADNVFQALRPLTFISLLGLAPFRLNLNPRKEVQTSK). A helical membrane pass occupies residues 48–68 (FSFFAGIVHFLFFVLCFGISV). Residues 69-87 (KEGDSIIGYFFQTNITRFS) are Extracellular-facing. An N-linked (GlcNAc...) asparagine glycan is attached at asparagine 82. A helical membrane pass occupies residues 88–108 (DGTLRLTGILAMSTIFGFAMF). Over 109 to 138 (KRQRLVSIIQNNIVVDEIFVRLGMKLDYRR) the chain is Cytoplasmic. Residues 139 to 159 (ILLSSFLISLGMLLFNVIYLC) traverse the membrane as a helical segment. Over 160-171 (VSYSLLVSATIS) the chain is Extracellular. A helical membrane pass occupies residues 172–192 (PSFVTFTTFALPHINISLMVF). Over 193 to 292 (KFLCTTDLAR…CQTIEEYFTY (100 aa)) the chain is Cytoplasmic. A helical membrane pass occupies residues 293-313 (PLLGIIAISFLFILFDDFYIL). Residues 314–329 (EAILNPKRLDVFEADE) are Extracellular-facing. A helical membrane pass occupies residues 330–350 (FFAFFLMQLIWYIVIIVLIVE). At 351–407 (GSSRTILHSSYTAAIVHKILNITDDPELRDRLFRLSLQLSHRKVLFTAAGLFRLDRT) the chain is on the cytoplasmic side. Residues 408–424 (LIFTITGAATCYLIILI) traverse the membrane as a helical segment. The Extracellular portion of the chain corresponds to 425–450 (QFRFTHHMDDTSSNSTNNLHSIHLGD). An N-linked (GlcNAc...) asparagine glycan is attached at asparagine 438.

Belongs to the insect chemoreceptor superfamily. Gustatory receptor (GR) family. Gr2a subfamily. In addition to expression in a large number of taste neurons, Gr28a is also expressed in a few nonchemosensory neurons, including the campaniform sensilla of the wing, leg stretch receptors, and multiple dendritic (MD) neurons in the abdomen. In larvea, is expressed in neurons of the terminal external chemosensory organ, the dorsal external chemosensory organ, as well as in the ventral and posterior pharyngeal sense organ.

It is found in the cell membrane. Its function is as follows. Probable gustatory receptor which mediates acceptance or avoidance behavior, depending on its substrates. Atypical expression also suggests nongustatory roles in the nervous system and tissues involved in proprioception, hygroreception, and other sensory modalities. It is also possible that it has chemosensory roles in the detection of internal ligands. This is Putative gustatory receptor 28a (Gr28a) from Drosophila melanogaster (Fruit fly).